Here is a 165-residue protein sequence, read N- to C-terminus: uncharacterized protein (165 aa).

A disordered region spans residues 53–123 (CSEKTGSAPN…PAPSSGRQGG (71 aa)). The span at 58–71 (GSAPNPGSSAPAPA) shows a compositional bias: low complexity.

This is an uncharacterized protein from Treponema pallidum (strain Nichols).